The following is a 582-amino-acid chain: UPF0329 protein ECU07_0070 (582 aa).

Residues 326–386 (EEKAKSKKKG…KTGKKSKGDQ (61 aa)) are disordered. A compositionally biased stretch (basic residues) spans 330 to 339 (KSKKKGKKKS). Residues 344–354 (EAKEEEKKESG) are compositionally biased toward basic and acidic residues.

Belongs to the UPF0329 family.

In Encephalitozoon cuniculi (strain GB-M1) (Microsporidian parasite), this protein is UPF0329 protein ECU07_0070.